A 405-amino-acid chain; its full sequence is Diaminopimelate decarboxylase (405 aa).

Lys46 carries the post-translational modification N6-(pyridoxal phosphate)lysine. Pyridoxal 5'-phosphate is bound by residues Gly225 and 259–262; that span reads EPGR. Substrate contacts are provided by Arg262, Arg298, and Tyr302. Cys329 serves as the catalytic Proton donor. Substrate is bound by residues Glu330 and Tyr358. Residue Tyr358 coordinates pyridoxal 5'-phosphate.

This sequence belongs to the Orn/Lys/Arg decarboxylase class-II family. LysA subfamily. Homodimer. Pyridoxal 5'-phosphate serves as cofactor.

It catalyses the reaction meso-2,6-diaminopimelate + H(+) = L-lysine + CO2. It functions in the pathway amino-acid biosynthesis; L-lysine biosynthesis via DAP pathway; L-lysine from DL-2,6-diaminopimelate: step 1/1. Its function is as follows. Specifically catalyzes the decarboxylation of meso-diaminopimelate (meso-DAP) to L-lysine. The sequence is that of Diaminopimelate decarboxylase from Helicobacter pylori (strain J99 / ATCC 700824) (Campylobacter pylori J99).